The chain runs to 1473 residues: NACHT, LRR and PYD domains-containing protein 1 (1473 aa).

Residues 1–92 form the Pyrin domain; that stretch reads MAGGAWGRLA…CAQAQEGAGH (92 aa). Residues 90 to 113 form a disordered region; that stretch reads AGHSPSFPYSPSEPHLGSPSQPTS. S93, S99, and S101 each carry phosphoserine; by MAPK11 and MAPK14. Residue S107 is modified to Phosphoserine; by MAPK14. Residues 111–117 carry the ZAKalpha motif 1 motif; the sequence is PTSTAVL. T112 carries the post-translational modification Phosphothreonine; by MAPK11, MAPK14 and MAP3K20. S113 is modified (phosphoserine; by MAP3K20). A phosphothreonine; by MAP3K20 mark is found at T114 and T129. Phosphoserine; by MAP3K20 is present on S132. A disordered region spans residues 160-254; the sequence is LPSSPDHESP…HTSLQPHHHP (95 aa). Position 163 is a phosphoserine; by MAPK14 (S163). Residue S168 is modified to Phosphoserine; by MAPK11 and MAPk14. S170 bears the Phosphoserine; by MAPK11 and MAPK14 mark. A compositionally biased stretch (polar residues) spans 170-182; it reads SQESPNAPTSTAV. Position 173 is a phosphoserine; by MAPK11 (S173). The ZAKalpha motif 2 signature appears at 177–183; sequence PTSTAVL. T178 is modified (phosphothreonine; by MAPK11). Position 179 is a phosphoserine; by MAPK11 and MAP3K20 (S179). T180 is modified (phosphothreonine; by MAPK11 and MAP3K20). Positions 218 to 231 are enriched in basic and acidic residues; sequence EIREREREKSEKGR. Positions 328-637 constitute an NACHT domain; sequence RIVILQGAAG…EFFAAMSYVL (310 aa). 334–341 contacts ATP; that stretch reads GAAGIGKS. LRR repeat units follow at residues 809–830, 838–858, 866–887, 895–915, 923–944, and 950–973; these read NLKE…SLCK, LLET…KDLA, TLTE…HLCQ, KLQR…QDLA, SLKE…LLCE, and ACKL…ELRA. The disordered stretch occupies residues 991-1017; it reads VMTPTEGLDTGEMSNSTSSLKRQRLGS. The segment at 1079-1212 is ZU5; that stretch reads FWGPTGPVAT…HHIVLENPSF (134 aa). Residues 1079-1364 form the FIIND domain; it reads FWGPTGPVAT…LMPATTLIPP (286 aa). Positions 1213–1364 are UPA; it reads SPLGVLLKMI…LMPATTLIPP (152 aa). A CARD domain is found at 1374–1463; that stretch reads DAPQLLHFVD…HLIMELWEKG (90 aa).

It belongs to the NLRP family. Interacts (via LRR repeats) with BCL2 and BCL2L1 (via the loop between motifs BH4 and BH3); these interactions reduce NLRP1 inflammasome-induced CASP1 activation and IL1B release, possibly by impairing NLRP1 interaction with PYCARD. Interacts with NOD2; this interaction is enhanced in the presence of muramyl dipeptide (MDP) and increases IL1B release. Interacts with EIF2AK2/PKR; this interaction requires EIF2AK2 activity, is accompanied by EIF2AK2 autophosphorylation and promotes inflammasome assembly in response to danger-associated signals. Interacts with MEFV; this interaction targets NLRP1 to degradation by autophagy, hence preventing excessive IL1B- and IL18-mediated inflammation. Binds (via LRR domain) to dsDNA and dsRNA. Interacts with DPP9; leading to inhibit activation of the inflammasome. DPP9 acts via formation of a ternary complex, composed of a DPP9 homodimer, one full-length NLRP1 protein, and one cleaved C-terminus of NLRP1 (NACHT, LRR and PYD domains-containing protein 1, C-terminus). Interacts with DPP8; leading to inhibit activation of the inflammasome, probably via formation of a ternary complex with DPP8. In terms of assembly, interacts with the C-terminal part of NLRP1 (NACHT, LRR and PYD domains-containing protein 1, C-terminus) in absence of pathogens and other damage-associated signals. As to quaternary structure, interacts with the N-terminal part of NLRP1 (NACHT, LRR and PYD domains-containing protein 1, N-terminus) in absence of pathogens and other damage-associated signals. Homomultimer; forms the NLRP1 inflammasome polymeric complex, a filament composed of homopolymers of this form in response to pathogens and other damage-associated signals. The NLRP1 inflammasome polymeric complex associates with PYCARD/ASC. Interacts (via CARD domain) with PYCARD/ASC (via CARD domain); leading to pro-caspase-1 (proCASP1) recruitment. Pro-caspase-1 (proCASP1) filament formation increases local enzyme concentration, resulting in trans-autocleavage and activation. Active CASP1 then processes IL1B and IL18 precursors, leading to the release of mature cytokines in the extracellular milieu and inflammatory response. (Microbial infection) Interacts with vaccinia virus protein F1. In terms of assembly, (Microbial infection) Interacts with human herpes virus 8/HHV-8 proteins ORF45; relieving autoinhibition of the NLRP1 inflammasome. Post-translationally, autocatalytically cleaved. Autocatalytic cleavage in FIIND region occurs constitutively, prior to activation signals, and is required for inflammasome activity (IL1B release), possibly by facilitating CASP1 binding. Both N- and C-terminal parts remain associated non-covalently. In terms of processing, ubiquitinated by the cullin:ZER1/ZYG11B complex in response to pathogen-associated signals, leading to its degradation by the proteasome and subsequent release of the cleaved C-terminal part of the protein (NACHT, LRR and PYD domains-containing protein 1, C-terminus), which polymerizes and forms the NLRP1 inflammasome. Phosphorylated by MAP3K20 isoform ZAKalpha, MAPK11 and MAPK14 in response to UV-B irradiation and ribosome collisions, promoting activation of the NLRP1 inflammasome and pyroptosis. Post-translationally, (Microbial infection) Cleaved between Gln-130 and Gly-131 by the Protease 3C from various human enteroviruses and rhinoviruses (EV68, EV71, Coxsackievirus B3, HRV-14 and HRV-16). This cleavage triggers N-glycine-mediated proteasomal degradation of the autoinhibitory NLRP1 N-terminal fragment via the cullin:ZER1/ZYG11B complex which liberates the activating C-terminal fragment and activates NLRP1 inflammasome. In terms of processing, (Microbial infection) Cleaved between Gln-333 and Gly-334 by the 3C-like proteinase nsp5 from human coronavirus SARS-CoV-2. This cleavage liberates the activating C-terminal fragment and activates NLRP1 inflammasome, leading to downstream activation of GSDME and lung epithelial cell death. In terms of tissue distribution, widely expressed. Abundantly expressed in primary immune cells (isoform 1 and isoform 2), including in neutrophils, monocytes/macrophages, dendritic cells (mostly Langerhans cells), and B- and T-lymphocytes (at protein level). Strongly expressed in epithelial cells lining the glandular epithelium, such as that of the gastrointestinal tract (stomach, small intestine, colon), the respiratory tract (trachea and bronchi), and the endometrial and endocervical glands, gallbladder, prostate, and breast (at protein level). In testis, expressed in spermatogonia and primary spermatocytes, but not in Sertoli cells (at protein level). In the brain, expressed in neurons, in particular in pyramidal ones and in oligodendrocytes, but not detected in microglia (at protein level). Expressed in adult and fetal ocular tissues, including in adult and 24-week old fetal choroid, sclera, cornea, and optic nerve, as well as in adult retina and fetal retina/retinal pigment epithelium. Highly expressed in the skin throughout the epidermis and in dermal fibroblasts, in both glabrous skin and plantar skin. It is detected in keratinocytes, but not in melanocytes. Expressed in epidermal appendages such as hair follicles.

Its subcellular location is the cytoplasm. It is found in the cytosol. The protein resides in the nucleus. It localises to the inflammasome. The catalysed reaction is ATP + H2O = ADP + phosphate + H(+). Its activity is regulated as follows. NLRP1 inflammasome is activated by cleavage by the Protease 3C from various human enteroviruses and rhinoviruses (EV68, EV71, Coxsackievirus B3, HRV-14 and HRV-16): cleavage promotes ubiquitination and degradation of the N-terminal part, releasing the cleaved C-terminal part of the protein (NACHT, LRR and PYD domains-containing protein 1, C-terminus), which polymerizes and forms the NLRP1 inflammasome. Activated double-stranded RNA: positive-strand RNA viruses such as Semliki forest virus and long dsRNA activate the NLRP1 inflammasome. In contrast to its mouse ortholog, not activated by Bacillus anthracis lethal toxin. NLRP1 inflammasome is inhibited by DPP8 and DPP9, which sequester the C-terminal fragment of NLRP1 (NACHT, LRR and PYD domains-containing protein 1, C-terminus) in a ternary complex, thereby preventing NLRP1 oligomerization and activation. NLRP1 inflammasome is activated by Val-boroPro (Talabostat, PT-100), an inhibitor of dipeptidyl peptidases DPP8 and DPP9. Val-boroPro relieves inhibition of DPP8 and/or DPP9 by promoting disruption of the ternary complex, releasing its C-terminal part from autoinhibition. ATPase activity is activated by dsRNA-binding but not dsDNA-binding. With respect to regulation, (Microbial infection) The NLRP1 inflammasome is activated by human herpes virus 8/HHV-8 protein ORF45, which interacts with the N-terminal part of NLRP1 and promotes its translocation into the nucleus, relieving autoinhibition and leading to activation. (Microbial infection) NLRP1 inflammasome is activated by cleavage by the 3C-like proteinase nsp5 from human coronavirus SARS-CoV-2. Acts as the sensor component of the NLRP1 inflammasome, which mediates inflammasome activation in response to various pathogen-associated signals, leading to subsequent pyroptosis. Inflammasomes are supramolecular complexes that assemble in the cytosol in response to pathogens and other damage-associated signals and play critical roles in innate immunity and inflammation. Acts as a recognition receptor (PRR): recognizes specific pathogens and other damage-associated signals, such as cleavage by some human enteroviruses and rhinoviruses, double-stranded RNA, UV-B irradiation, or Val-boroPro inhibitor, and mediates the formation of the inflammasome polymeric complex composed of NLRP1, CASP1 and PYCARD/ASC. In response to pathogen-associated signals, the N-terminal part of NLRP1 is degraded by the proteasome, releasing the cleaved C-terminal part of the protein (NACHT, LRR and PYD domains-containing protein 1, C-terminus), which polymerizes and associates with PYCARD/ASC to initiate the formation of the inflammasome complex: the NLRP1 inflammasome recruits pro-caspase-1 (proCASP1) and promotes caspase-1 (CASP1) activation, which subsequently cleaves and activates inflammatory cytokines IL1B and IL18 and gasdermin-D (GSDMD), leading to pyroptosis. In the absence of GSDMD expression, the NLRP1 inflammasome is able to recruit and activate CASP8, leading to activation of gasdermin-E (GSDME). Activation of NLRP1 inflammasome is also required for HMGB1 secretion; the active cytokines and HMGB1 stimulate inflammatory responses. Binds ATP and shows ATPase activity. Plays an important role in antiviral immunity and inflammation in the human airway epithelium. Specifically recognizes a number of pathogen-associated signals: upon infection by human rhinoviruses 14 and 16 (HRV-14 and HRV-16), NLRP1 is cleaved and activated which triggers NLRP1-dependent inflammasome activation and IL18 secretion. Positive-strand RNA viruses, such as Semliki forest virus and long dsRNA activate the NLRP1 inflammasome, triggering IL1B release in a NLRP1-dependent fashion. Acts as a direct sensor for long dsRNA and thus RNA virus infection. May also be activated by muramyl dipeptide (MDP), a fragment of bacterial peptidoglycan, in a NOD2-dependent manner. The NLRP1 inflammasome is also activated in response to UV-B irradiation causing ribosome collisions: ribosome collisions cause phosphorylation and activation of NLRP1 in a MAP3K20-dependent manner, leading to pyroptosis. In terms of biological role, constitutes the precursor of the NLRP1 inflammasome, which mediates autoproteolytic processing within the FIIND domain to generate the N-terminal and C-terminal parts, which are associated non-covalently in absence of pathogens and other damage-associated signals. Functionally, regulatory part that prevents formation of the NLRP1 inflammasome: in absence of pathogens and other damage-associated signals, interacts with the C-terminal part of NLRP1 (NACHT, LRR and PYD domains-containing protein 1, C-terminus), preventing activation of the NLRP1 inflammasome. In response to pathogen-associated signals, this part is ubiquitinated and degraded by the proteasome, releasing the cleaved C-terminal part of the protein, which polymerizes and forms the NLRP1 inflammasome. Its function is as follows. Constitutes the active part of the NLRP1 inflammasome. In absence of pathogens and other damage-associated signals, interacts with the N-terminal part of NLRP1 (NACHT, LRR and PYD domains-containing protein 1, N-terminus), preventing activation of the NLRP1 inflammasome. In response to pathogen-associated signals, the N-terminal part of NLRP1 is degraded by the proteasome, releasing this form, which polymerizes and associates with PYCARD/ASC to form of the NLRP1 inflammasome complex: the NLRP1 inflammasome complex then directly recruits pro-caspase-1 (proCASP1) and promotes caspase-1 (CASP1) activation, leading to gasdermin-D (GSDMD) cleavage and subsequent pyroptosis. It is unclear whether is involved in inflammasome formation. It is not cleaved within the FIIND domain, does not assemble into specks, nor promote IL1B release. However, in an vitro cell-free system, it has been shown to be activated by MDP. This is NACHT, LRR and PYD domains-containing protein 1 from Homo sapiens (Human).